Here is a 153-residue protein sequence, read N- to C-terminus: Arachidonate 5-lipoxygenase-activating protein (153 aa).

Over 1 to 8 (MDQETVGN) the chain is Lumenal. The helical transmembrane segment at 9 to 30 (VVLLAIVTLISVVQNGFFAHKV) threads the bilayer. Topologically, residues 31–52 (EHESRTQNGRSFQRTGTLAFER) are cytoplasmic. Residues 53–77 (VYTANQNCVDAYPTFLAVLWSAGLL) form a helical membrane-spanning segment. Over 78–80 (CSQ) the chain is Lumenal. The helical transmembrane segment at 81 to 102 (VPAAFAGLMYLLVRQKYFVGYL) threads the bilayer. Over 103 to 107 (GERTQ) the chain is Cytoplasmic. Residues 108 to 115 (STPGYIFG) lie within the membrane without spanning it. The chain crosses the membrane as a helical span at residues 116-128 (KRIILFLFLMSVA). Topologically, residues 129–153 (GIFNYYLIFFFGSDFENYIKTVTTT) are lumenal.

Belongs to the MAPEG family. Homotrimer. Interacts with LTC4S and ALOX5.

It localises to the nucleus membrane. The protein resides in the endoplasmic reticulum membrane. In terms of biological role, required for leukotriene biosynthesis by ALOX5 (5-lipoxygenase). Anchors ALOX5 to the membrane. Binds arachidonic acid, and could play an essential role in the transfer of arachidonic acid to ALOX5. Binds to MK-886, a compound that blocks the biosynthesis of leukotrienes. In Macaca mulatta (Rhesus macaque), this protein is Arachidonate 5-lipoxygenase-activating protein (ALOX5AP).